A 162-amino-acid chain; its full sequence is UPF0114 protein PFLU_5318 (162 aa).

3 helical membrane-spanning segments follow: residues 15 to 35, 53 to 73, and 136 to 156; these read LLAP…LKFF, LILV…LVMV, and LMWY…MGYL.

The protein belongs to the UPF0114 family.

It is found in the cell membrane. The chain is UPF0114 protein PFLU_5318 from Pseudomonas fluorescens (strain SBW25).